The sequence spans 406 residues: S-adenosylmethionine synthase (406 aa).

140–145 (GRGSVD) is an ATP binding site.

This sequence belongs to the AdoMet synthase 2 family. Requires Mg(2+) as cofactor.

The catalysed reaction is L-methionine + ATP + H2O = S-adenosyl-L-methionine + phosphate + diphosphate. It participates in amino-acid biosynthesis; S-adenosyl-L-methionine biosynthesis; S-adenosyl-L-methionine from L-methionine: step 1/1. Catalyzes the formation of S-adenosylmethionine from methionine and ATP. In Aeropyrum pernix (strain ATCC 700893 / DSM 11879 / JCM 9820 / NBRC 100138 / K1), this protein is S-adenosylmethionine synthase (mat).